Reading from the N-terminus, the 62-residue chain is Photosystem II reaction center protein Z (62 aa).

2 consecutive transmembrane segments (helical) span residues 8 to 28 (AVFA…VVFA) and 41 to 61 (FSGT…NSLI).

Belongs to the PsbZ family. As to quaternary structure, PSII is composed of 1 copy each of membrane proteins PsbA, PsbB, PsbC, PsbD, PsbE, PsbF, PsbH, PsbI, PsbJ, PsbK, PsbL, PsbM, PsbT, PsbY, PsbZ, Psb30/Ycf12, at least 3 peripheral proteins of the oxygen-evolving complex and a large number of cofactors. It forms dimeric complexes.

The protein localises to the plastid. It localises to the chloroplast thylakoid membrane. Its function is as follows. May control the interaction of photosystem II (PSII) cores with the light-harvesting antenna, regulates electron flow through the 2 photosystem reaction centers. PSII is a light-driven water plastoquinone oxidoreductase, using light energy to abstract electrons from H(2)O, generating a proton gradient subsequently used for ATP formation. The protein is Photosystem II reaction center protein Z of Piper cenocladum (Ant piper).